The following is a 410-amino-acid chain: Protein king tubby 2 (410 aa).

Polar residues predominate over residues 48 to 72 (SPNNPDQILTSTGNASITTTPTSPY). Disordered regions lie at residues 48 to 109 (SPNN…STRH) and 121 to 159 (ISPA…EGDV). Residues 132–143 (SHHDSSSGKSVE) are compositionally biased toward basic and acidic residues.

It belongs to the TUB family.

It localises to the cytoplasm. The protein localises to the nucleus. This is Protein king tubby 2 (king-tubby2) from Aedes aegypti (Yellowfever mosquito).